The chain runs to 321 residues: Glucokinase (321 aa).

8 to 13 (GDVGGT) contacts ATP.

The protein belongs to the bacterial glucokinase family.

The protein localises to the cytoplasm. The enzyme catalyses D-glucose + ATP = D-glucose 6-phosphate + ADP + H(+). In Klebsiella pneumoniae (strain 342), this protein is Glucokinase.